Here is a 276-residue protein sequence, read N- to C-terminus: Orotidine 5'-phosphate decarboxylase (276 aa).

Substrate-binding positions include aspartate 40, 62 to 64 (KTH), 93 to 102 (DRKFIDIGNT), tyrosine 228, and arginine 246. Lysine 95 functions as the Proton donor in the catalytic mechanism.

Belongs to the OMP decarboxylase family.

The enzyme catalyses orotidine 5'-phosphate + H(+) = UMP + CO2. It participates in pyrimidine metabolism; UMP biosynthesis via de novo pathway; UMP from orotate: step 2/2. The chain is Orotidine 5'-phosphate decarboxylase (pyrG) from Penicillium nalgiovense.